The chain runs to 153 residues: NAD(P)H-quinone oxidoreductase subunit N (153 aa).

This sequence belongs to the complex I NdhN subunit family. In terms of assembly, NDH-1 can be composed of about 15 different subunits; different subcomplexes with different compositions have been identified which probably have different functions.

It localises to the cellular thylakoid membrane. It catalyses the reaction a plastoquinone + NADH + (n+1) H(+)(in) = a plastoquinol + NAD(+) + n H(+)(out). It carries out the reaction a plastoquinone + NADPH + (n+1) H(+)(in) = a plastoquinol + NADP(+) + n H(+)(out). NDH-1 shuttles electrons from an unknown electron donor, via FMN and iron-sulfur (Fe-S) centers, to quinones in the respiratory and/or the photosynthetic chain. The immediate electron acceptor for the enzyme in this species is believed to be plastoquinone. Couples the redox reaction to proton translocation, and thus conserves the redox energy in a proton gradient. Cyanobacterial NDH-1 also plays a role in inorganic carbon-concentration. This chain is NAD(P)H-quinone oxidoreductase subunit N, found in Synechococcus sp. (strain WH7803).